The following is a 429-amino-acid chain: Maltoporin 2 (429 aa).

The first 25 residues, 1 to 25 (MMITLRKLPLAVAVAAGVMSAQALA), serve as a signal peptide directing secretion. The segment covering 397-412 (GLQTKDSSGSGAFTSS) has biased composition (polar residues). Positions 397 to 416 (GLQTKDSSGSGAFTSSRGDD) are disordered.

Belongs to the porin LamB (TC 1.B.3) family. In terms of assembly, homotrimer formed of three 18-stranded antiparallel beta-barrels, containing three independent channels.

It localises to the cell outer membrane. The enzyme catalyses beta-maltose(in) = beta-maltose(out). In terms of biological role, involved in the transport of maltose and maltodextrins. This chain is Maltoporin 2, found in Klebsiella pneumoniae subsp. pneumoniae (strain ATCC 700721 / MGH 78578).